Reading from the N-terminus, the 169-residue chain is Peptide methionine sulfoxide reductase MsrA (169 aa).

The active site involves cysteine 10.

The protein belongs to the MsrA Met sulfoxide reductase family.

It catalyses the reaction L-methionyl-[protein] + [thioredoxin]-disulfide + H2O = L-methionyl-(S)-S-oxide-[protein] + [thioredoxin]-dithiol. The enzyme catalyses [thioredoxin]-disulfide + L-methionine + H2O = L-methionine (S)-S-oxide + [thioredoxin]-dithiol. Has an important function as a repair enzyme for proteins that have been inactivated by oxidation. Catalyzes the reversible oxidation-reduction of methionine sulfoxide in proteins to methionine. The sequence is that of Peptide methionine sulfoxide reductase MsrA from Streptococcus agalactiae serotype Ia (strain ATCC 27591 / A909 / CDC SS700).